The following is a 195-amino-acid chain: Imidazoleglycerol-phosphate dehydratase (195 aa).

Belongs to the imidazoleglycerol-phosphate dehydratase family.

Its subcellular location is the cytoplasm. The enzyme catalyses D-erythro-1-(imidazol-4-yl)glycerol 3-phosphate = 3-(imidazol-4-yl)-2-oxopropyl phosphate + H2O. Its pathway is amino-acid biosynthesis; L-histidine biosynthesis; L-histidine from 5-phospho-alpha-D-ribose 1-diphosphate: step 6/9. In Alkaliphilus metalliredigens (strain QYMF), this protein is Imidazoleglycerol-phosphate dehydratase.